The sequence spans 128 residues: Spore germination protein 1/2/3-related protein (128 aa).

The N-terminal stretch at methionine 1–alanine 26 is a signal peptide. Residues asparagine 55 and asparagine 119 are each glycosylated (N-linked (GlcNAc...) asparagine).

The protein belongs to the Dictyostelium gerABC family.

The protein localises to the secreted. The sequence is that of Spore germination protein 1/2/3-related protein from Dictyostelium discoideum (Social amoeba).